The chain runs to 139 residues: Tol-Pal system protein TolR (139 aa).

A helical membrane pass occupies residues 15-35 (IVPFLDVLLVLVLIFMATAPI).

It belongs to the ExbD/TolR family. In terms of assembly, the Tol-Pal system is composed of five core proteins: the inner membrane proteins TolA, TolQ and TolR, the periplasmic protein TolB and the outer membrane protein Pal. They form a network linking the inner and outer membranes and the peptidoglycan layer.

The protein localises to the cell inner membrane. In terms of biological role, part of the Tol-Pal system, which plays a role in outer membrane invagination during cell division and is important for maintaining outer membrane integrity. This chain is Tol-Pal system protein TolR, found in Haemophilus influenzae (strain ATCC 51907 / DSM 11121 / KW20 / Rd).